A 437-amino-acid chain; its full sequence is 3-phosphoshikimate 1-carboxyvinyltransferase (437 aa).

The 3-phosphoshikimate site is built by Lys-26, Ser-27, and Arg-31. Residue Lys-26 coordinates phosphoenolpyruvate. Residues Gly-99 and Arg-127 each contribute to the phosphoenolpyruvate site. Residues Ser-172, Gln-174, Asp-320, and Lys-347 each contribute to the 3-phosphoshikimate site. Gln-174 lines the phosphoenolpyruvate pocket. The active-site Proton acceptor is the Asp-320. Residues Arg-351 and Arg-392 each contribute to the phosphoenolpyruvate site.

This sequence belongs to the EPSP synthase family. Monomer.

Its subcellular location is the cytoplasm. The catalysed reaction is 3-phosphoshikimate + phosphoenolpyruvate = 5-O-(1-carboxyvinyl)-3-phosphoshikimate + phosphate. It participates in metabolic intermediate biosynthesis; chorismate biosynthesis; chorismate from D-erythrose 4-phosphate and phosphoenolpyruvate: step 6/7. Catalyzes the transfer of the enolpyruvyl moiety of phosphoenolpyruvate (PEP) to the 5-hydroxyl of shikimate-3-phosphate (S3P) to produce enolpyruvyl shikimate-3-phosphate and inorganic phosphate. In Methylococcus capsulatus (strain ATCC 33009 / NCIMB 11132 / Bath), this protein is 3-phosphoshikimate 1-carboxyvinyltransferase.